Here is a 75-residue protein sequence, read N- to C-terminus: Mitochondrial import receptor subunit TOM7-1 (75 aa).

At methionine 1 the chain carries N-acetylmethionine. Residues 1–28 (MESTISLKVNKGKGKGSKGASSSDDKSK) are disordered. Topologically, residues 1–46 (MESTISLKVNKGKGKGSKGASSSDDKSKFDVVKEWTNWSLKKAKVV) are cytoplasmic. Residues 47–64 (THYGFIPLVIFVGMNSDP) traverse the membrane as a helical segment. Residues 65–75 (KPHLFQLLSPV) are Mitochondrial intermembrane-facing.

The protein belongs to the Tom7 family. In terms of assembly, forms part of the preprotein translocase complex of the outer mitochondrial membrane (TOM complex) which consists of at least 6 different proteins (TOM5, TOM6, TOM7, TOM20, TOM22/TOM9 and TOM40). In terms of tissue distribution, expressed in roots, flowers, young cotyledons and leaves.

Its subcellular location is the mitochondrion outer membrane. Functionally, seems to act as a modulator of the dynamics of the mitochondrial protein transport machinery. Seems to promote the dissociation of subunits of the outer membrane translocase. This chain is Mitochondrial import receptor subunit TOM7-1 (TOM7-1), found in Arabidopsis thaliana (Mouse-ear cress).